Here is a 772-residue protein sequence, read N- to C-terminus: MDVEGGGAAARRKGGWWWWREEAVLAYQSLGVVYGEVAAAPLYVYRSAFAGGDIEHSAGNEEIYGALSLVFWTLTLVPLAKYVLLVLRADDAGEGGTFALYSLICRRVRAGLLPPCAAAAAGEELDAAGAAAAPVSAVRAALERHRVLQRLLLLLALLGTCMVIGDGVLTPAVSVFSAVSGLELSMDKDQHKYILLPITCVILVCLFALQHYGTHRVGFLFAPIVCLWLLCISIIGVYNIIHWNPHVYQALSPYYMYKFLRKTQTGGWMSLGGILLCVTGSEAMYADLGHFTQNSIKMAFTLLVYPALVLAYMGQAAYISRHHNFEDGSHIGFYVSVPEKIRWPVLGIAILASVVGSQAIITGTFSIIKQCSSLNCFPRVKIVHTSSTVHGQIYIPEINWILMILCLSVTIGFRDTKHLTNAQGLAVITVMLVTTCLMSLVILLCWNKSIVYALSFLLFFGAIEVIYFAASLVKFHEGAWVPVTLSFIFMMVMCVWHYGTKKKYEFDVQNKVSISWLLNIGPSLGIVRVRGIGLIHTELMSGIPAIFSHFVTNLPAFHQVLVFLCIKSVSVPHVQPEERFLVGRIGPKKYRIYRVIVRYGYRDVQKDDVEFEKDLVSSIAEFIRCADSNQNSFMDGASHSCEGLSFISKGLPLEEEEGEFDGSDSTGSSAHKEINPNTTAPKPKRVRFALPKDTKIDREVRGELQELMEAREAGMSFITGRSHMKAKSGSGLIKQIVINFGYEFLRRNSRGPAFAVNLPHVSTVEVGMICLV.

Residues 1 to 23 (MDVEGGGAAARRKGGWWWWREEA) lie on the Cytoplasmic side of the membrane. The chain crosses the membrane as a helical span at residues 24–44 (VLAYQSLGVVYGEVAAAPLYV). Over 45–66 (YRSAFAGGDIEHSAGNEEIYGA) the chain is Extracellular. Residues 67 to 87 (LSLVFWTLTLVPLAKYVLLVL) form a helical membrane-spanning segment. Residues 88 to 150 (RADDAGEGGT…ALERHRVLQR (63 aa)) are Cytoplasmic-facing. Residues 151–171 (LLLLLALLGTCMVIGDGVLTP) form a helical membrane-spanning segment. The Extracellular segment spans residues 172–192 (AVSVFSAVSGLELSMDKDQHK). Residues 193–213 (YILLPITCVILVCLFALQHYG) traverse the membrane as a helical segment. Residues 214–216 (THR) lie on the Cytoplasmic side of the membrane. The chain crosses the membrane as a helical span at residues 217–237 (VGFLFAPIVCLWLLCISIIGV). Over 238-265 (YNIIHWNPHVYQALSPYYMYKFLRKTQT) the chain is Extracellular. Residues 266-286 (GGWMSLGGILLCVTGSEAMYA) form a helical membrane-spanning segment. Residues 287–298 (DLGHFTQNSIKM) lie on the Cytoplasmic side of the membrane. Residues 299 to 319 (AFTLLVYPALVLAYMGQAAYI) form a helical membrane-spanning segment. Residues 320–344 (SRHHNFEDGSHIGFYVSVPEKIRWP) are Extracellular-facing. The chain crosses the membrane as a helical span at residues 345-365 (VLGIAILASVVGSQAIITGTF). Residues 366–392 (SIIKQCSSLNCFPRVKIVHTSSTVHGQ) lie on the Cytoplasmic side of the membrane. A helical transmembrane segment spans residues 393–413 (IYIPEINWILMILCLSVTIGF). Residues 414-423 (RDTKHLTNAQ) are Extracellular-facing. A helical transmembrane segment spans residues 424–444 (GLAVITVMLVTTCLMSLVILL). At 445–449 (CWNKS) the chain is on the cytoplasmic side. The helical transmembrane segment at 450-470 (IVYALSFLLFFGAIEVIYFAA) threads the bilayer. At 471 to 477 (SLVKFHE) the chain is on the extracellular side. The chain crosses the membrane as a helical span at residues 478–498 (GAWVPVTLSFIFMMVMCVWHY). The Cytoplasmic segment spans residues 499-772 (GTKKKYEFDV…TVEVGMICLV (274 aa)). A disordered region spans residues 656–684 (EEGEFDGSDSTGSSAHKEINPNTTAPKPK).

The protein belongs to the HAK/KUP transporter (TC 2.A.72.3) family.

The protein localises to the membrane. Functionally, high-affinity potassium transporter. The sequence is that of Potassium transporter 24 (HAK24) from Oryza sativa subsp. japonica (Rice).